We begin with the raw amino-acid sequence, 215 residues long: Cytokinin riboside 5'-monophosphate phosphoribohydrolase LOG3 (215 aa).

Residues Glu84, 102-103 (RK), 119-125 (GYGTLEE), and Thr131 contribute to the substrate site.

This sequence belongs to the LOG family. As to expression, expressed in roots and shoots. Detected in root procambium, lateral root primordia, vascular tissues of immature leaves, axillary buds, style and ovular funiculus.

The protein resides in the cytoplasm. It localises to the nucleus. The enzyme catalyses N(6)-(dimethylallyl)adenosine 5'-phosphate + H2O = N(6)-dimethylallyladenine + D-ribose 5-phosphate. The catalysed reaction is 9-ribosyl-trans-zeatin 5'-phosphate + H2O = trans-zeatin + D-ribose 5-phosphate. In terms of biological role, cytokinin-activating enzyme working in the direct activation pathway. Phosphoribohydrolase that converts inactive cytokinin nucleotides to the biologically active free-base forms. This Arabidopsis thaliana (Mouse-ear cress) protein is Cytokinin riboside 5'-monophosphate phosphoribohydrolase LOG3 (LOG3).